A 288-amino-acid polypeptide reads, in one-letter code: Polyamine aminopropyltransferase (288 aa).

The PABS domain occupies 9–238 (ETLHDQFGQY…GIMTFAWATD (230 aa)). Gln-33 contributes to the S-methyl-5'-thioadenosine binding site. Positions 64 and 88 each coordinate spermidine. Residues Glu-108 and 140-141 (DG) contribute to the S-methyl-5'-thioadenosine site. Asp-158 acts as the Proton acceptor in catalysis. 158–161 (DCTD) is a binding site for spermidine. S-methyl-5'-thioadenosine is bound at residue Pro-165.

It belongs to the spermidine/spermine synthase family. Homodimer or homotetramer.

It is found in the cytoplasm. It catalyses the reaction S-adenosyl 3-(methylsulfanyl)propylamine + putrescine = S-methyl-5'-thioadenosine + spermidine + H(+). It functions in the pathway amine and polyamine biosynthesis; spermidine biosynthesis; spermidine from putrescine: step 1/1. Catalyzes the irreversible transfer of a propylamine group from the amino donor S-adenosylmethioninamine (decarboxy-AdoMet) to putrescine (1,4-diaminobutane) to yield spermidine. The chain is Polyamine aminopropyltransferase from Shigella dysenteriae serotype 1 (strain Sd197).